Consider the following 482-residue polypeptide: Ubiquitin carboxyl-terminal hydrolase 6 (482 aa).

Positions 2–77 (PTVSVKWQKK…LMMMGTADEI (76 aa)) constitute a Ubiquitin-like domain. The region spanning 104–478 (AGLVNLGNTC…MAYITMYKAR (375 aa)) is the USP domain. Cys113 (nucleophile) is an active-site residue. The tract at residues 172–191 (SQFWMVLRKKYPQFSQLQNG) is calmodulin-binding. Composition is skewed to basic and acidic residues over residues 350-361 (PRQKLREEEGKK) and 371-381 (GSKDSDVKMTD). Positions 350–407 (PRQKLREEEGKKLGLQTSAKSGSKDSDVKMTDAEASANGSGESSTVNPQEGTSSEKET) are disordered. Residues 382–393 (AEASANGSGESS) show a composition bias toward low complexity. Residue His430 is the Proton acceptor of the active site.

This sequence belongs to the peptidase C19 family. In terms of assembly, interacts with calmodulin (CaM).

It catalyses the reaction Thiol-dependent hydrolysis of ester, thioester, amide, peptide and isopeptide bonds formed by the C-terminal Gly of ubiquitin (a 76-residue protein attached to proteins as an intracellular targeting signal).. Its function is as follows. Recognizes and hydrolyzes the peptide bond at the C-terminal Gly of ubiquitin. Involved in the processing of poly-ubiquitin precursors as well as that of ubiquitinated proteins. The polypeptide is Ubiquitin carboxyl-terminal hydrolase 6 (UBP6) (Arabidopsis thaliana (Mouse-ear cress)).